The following is an 831-amino-acid chain: Cation/H(+) symporter 13 (831 aa).

12 helical membrane passes run 50–70 (YALP…RLIF), 89–109 (VVLG…FLPA), 112–132 (KIII…LLGL), 147–167 (ILIG…TIMF), 214–234 (LATH…LAFN), 250–270 (MIIG…VWLT), 282–302 (VVPF…GEAM), 303–323 (GVHA…GPPL), 334–354 (FASN…TNFF), 364–384 (VVMI…GTAA), 397–417 (LCLA…TIVW), and 430–450 (LVII…VYLY).

This sequence belongs to the monovalent cation:proton antiporter 2 (CPA2) transporter (TC 2.A.37) family. CHX (TC 2.A.37.4) subfamily. Preferentially expressed in pollen before and after germination. Detected in pollen grains within anthers of the flower buds or in pollen on fully open flowers and on the stigma, and in pollen tubes growing in the style. Weakly expressed in roots.

Its subcellular location is the cell membrane. Its function is as follows. High-affinity potassium transporter that plays a role in K(+) acquisition. May operate as a K(+)/H(+) symporter. This is Cation/H(+) symporter 13 (CHX13) from Arabidopsis thaliana (Mouse-ear cress).